Here is a 259-residue protein sequence, read N- to C-terminus: Ribosomal RNA small subunit methyltransferase A (259 aa).

6 residues coordinate S-adenosyl-L-methionine: N13, L15, G40, E61, D85, and N103.

Belongs to the class I-like SAM-binding methyltransferase superfamily. rRNA adenine N(6)-methyltransferase family. RsmA subfamily.

Its subcellular location is the cytoplasm. The catalysed reaction is adenosine(1518)/adenosine(1519) in 16S rRNA + 4 S-adenosyl-L-methionine = N(6)-dimethyladenosine(1518)/N(6)-dimethyladenosine(1519) in 16S rRNA + 4 S-adenosyl-L-homocysteine + 4 H(+). Functionally, specifically dimethylates two adjacent adenosines (A1518 and A1519) in the loop of a conserved hairpin near the 3'-end of 16S rRNA in the 30S particle. May play a critical role in biogenesis of 30S subunits. In Neisseria meningitidis serogroup C / serotype 2a (strain ATCC 700532 / DSM 15464 / FAM18), this protein is Ribosomal RNA small subunit methyltransferase A.